Reading from the N-terminus, the 262-residue chain is MVLIRVLANLLILQLSYAQKSSELVIGGDECNINEHRFLVALYDYWSQSFLCGGTLINEEWVLTAKHCDRTHILIYVGVHDRSVQFDKEQRRFPKEKYFFDCSNNFTKWDKDIMLIRLNKPVSYSEHIAPLSLPSSPPIVGSVCRAMGWGQTTSPQETLPDVPHCANINLLDYEVCRTAHPQFRLPATSRTLCAGVLEGGIDTCNRDSGGPLICNGQFQGIVFWGPDPCAQPDKPGLYTKVFDHLDWIQSIIAGEKTVNCPP.

A signal peptide spans 1-18 (MVLIRVLANLLILQLSYA). The propeptide occupies 19 to 24 (QKSSEL). In terms of domain architecture, Peptidase S1 spans 25–253 (VIGGDECNIN…HLDWIQSIIA (229 aa)). Intrachain disulfides connect Cys31-Cys165, Cys52-Cys68, Cys144-Cys214, Cys176-Cys193, and Cys204-Cys229. His67 serves as the catalytic Charge relay system. An N-linked (GlcNAc...) asparagine glycan is attached at Asn105. Residue Asp112 is the Charge relay system of the active site. Catalysis depends on Ser208, which acts as the Charge relay system.

This sequence belongs to the peptidase S1 family. Snake venom subfamily. In terms of assembly, monomer. In terms of tissue distribution, expressed by the venom gland.

It localises to the secreted. Snake venom serine protease that may act in the hemostasis system of the prey. In Crotalus adamanteus (Eastern diamondback rattlesnake), this protein is Snake venom serine proteinase 1.